A 435-amino-acid chain; its full sequence is Eukaryotic translation initiation factor 3 subunit E (435 aa).

Residues Thr241 to Gln409 form the PCI domain.

It belongs to the eIF-3 subunit E family. Component of the eukaryotic translation initiation factor 3 (eIF-3) complex.

The protein resides in the cytoplasm. Functionally, component of the eukaryotic translation initiation factor 3 (eIF-3) complex, which is involved in protein synthesis of a specialized repertoire of mRNAs and, together with other initiation factors, stimulates binding of mRNA and methionyl-tRNAi to the 40S ribosome. The eIF-3 complex specifically targets and initiates translation of a subset of mRNAs involved in cell proliferation. In Phaeosphaeria nodorum (strain SN15 / ATCC MYA-4574 / FGSC 10173) (Glume blotch fungus), this protein is Eukaryotic translation initiation factor 3 subunit E.